The chain runs to 347 residues: NADH-ubiquinone oxidoreductase chain 2 (347 aa).

The next 9 helical transmembrane spans lie at 3–23 (PLAL…TMMS), 59–79 (YFMT…INLM), 93–115 (VASN…HFWV), 150–170 (NTNL…WGGL), 178–198 (ILAY…PFNP), 199–219 (TLTL…FMIL), 242–262 (IMLM…GFMP), 274–294 (NSII…YFYM), and 326–346 (LPTL…ISML).

The protein belongs to the complex I subunit 2 family. As to quaternary structure, core subunit of respiratory chain NADH dehydrogenase (Complex I) which is composed of 45 different subunits. Interacts with TMEM242.

The protein resides in the mitochondrion inner membrane. The enzyme catalyses a ubiquinone + NADH + 5 H(+)(in) = a ubiquinol + NAD(+) + 4 H(+)(out). Its function is as follows. Core subunit of the mitochondrial membrane respiratory chain NADH dehydrogenase (Complex I) which catalyzes electron transfer from NADH through the respiratory chain, using ubiquinone as an electron acceptor. Essential for the catalytic activity and assembly of complex I. The polypeptide is NADH-ubiquinone oxidoreductase chain 2 (Loxodonta africana (African elephant)).